The chain runs to 503 residues: Puromycin resistance protein pur8 (503 aa).

The Cytoplasmic segment spans residues 1–24; it reads MARKPDISAVPVESAACQGPDPRR. Residues 25-45 traverse the membrane as a helical segment; it reads WWGLVVILAAQLLVVLDGTVV. Topologically, residues 46 to 64 are extracellular; it reads NIALPSVQRDLGMSDTSRQ. The helical transmembrane segment at 65-85 threads the bilayer; the sequence is WVITAYTLAFGGLLLLGGRVA. The Cytoplasmic segment spans residues 86–92; it reads DAFGRRR. The helical transmembrane segment at 93-113 threads the bilayer; that stretch reads IFAVGILGFGLASLLGGAAPD. Topologically, residues 114 to 122 are extracellular; that stretch reads PGTLFLARA. The helical transmembrane segment at 123-143 threads the bilayer; the sequence is LQGVFAAALAPAALALINTLF. At 144 to 152 the chain is on the cytoplasmic side; the sequence is TEPGERGKA. The chain crosses the membrane as a helical span at residues 153–173; sequence FGVYGAVSGGGAAVGLLAGGL. Over 174-181 the chain is Extracellular; sequence LTEYLDWR. A helical transmembrane segment spans residues 182–202; that stretch reads WCLYVNAPVALLALLGCRLLP. The Cytoplasmic portion of the chain corresponds to 203–212; that stretch reads RDRRTGRAVR. A helical membrane pass occupies residues 213–233; the sequence is LDLPGTLLGCGGLVAIVYAFA. The Extracellular segment spans residues 234 to 241; the sequence is EAESGWGD. Residues 242–262 traverse the membrane as a helical segment; the sequence is PLVVRLLVLGVLMLVAFALVE. Topologically, residues 263–280 are cytoplasmic; it reads RRVQDPLLPPGVVAHRVR. A helical transmembrane segment spans residues 281–301; the sequence is GGSFLVVGLPQIGLFGLFLFL. At 302–313 the chain is on the extracellular side; sequence TYYLQGILDYSP. A helical membrane pass occupies residues 314–334; it reads VLTGVAFLPLGLGIAVGSSLI. Residues 335–346 lie on the Cytoplasmic side of the membrane; the sequence is AARLLPRTRPRT. Residues 347 to 367 traverse the membrane as a helical segment; it reads LIVGALLAAAAGMALLTRLEP. The Extracellular portion of the chain corresponds to 368 to 371; that stretch reads DTPQ. The chain crosses the membrane as a helical span at residues 372–392; it reads VYLTHLLPAQILIGLGIGCMM. The Cytoplasmic portion of the chain corresponds to 393–422; it reads MPAMHTATARVAPHEAGAAAAVVNSAQQVG. A helical transmembrane segment spans residues 423–443; that stretch reads GALGVALLNTVSTGATAAYLA. Over 444-461 the chain is Extracellular; the sequence is DHGTSPAATVDGTVHGYT. A helical transmembrane segment spans residues 462–482; that stretch reads VAIAFAVGVLLLTAVLAWVLI. The Cytoplasmic segment spans residues 483–503; sequence DSRTEAADETGSASVTPARPR.

It belongs to the major facilitator superfamily. EmrB family.

It is found in the cell membrane. May be involved in active puromycin efflux energized by a proton-dependent electrochemical gradient. In addition, it could be implicated in secreting N-acetylpuromycin, the last intermediate of the puromycin biosynthesis pathway, to the environment. This Streptomyces alboniger protein is Puromycin resistance protein pur8 (pur8).